Reading from the N-terminus, the 306-residue chain is Agmatinase (306 aa).

Positions 126, 149, 151, 153, 230, and 232 each coordinate Mn(2+).

Belongs to the arginase family. Agmatinase subfamily. The cofactor is Mn(2+).

The catalysed reaction is agmatine + H2O = urea + putrescine. Its pathway is amine and polyamine biosynthesis; putrescine biosynthesis via agmatine pathway; putrescine from agmatine: step 1/1. Its function is as follows. Catalyzes the formation of putrescine from agmatine. This chain is Agmatinase, found in Klebsiella pneumoniae (strain 342).